A 100-amino-acid polypeptide reads, in one-letter code: uncharacterized protein (100 aa).

The protein belongs to the ycf15 family.

The protein resides in the plastid. It is found in the chloroplast. This is an uncharacterized protein from Panax ginseng (Korean ginseng).